The following is a 195-amino-acid chain: Ribonuclease HII (195 aa).

Positions 8–195 (WGVVGVDEAG…FAPVRRLLGG (188 aa)) constitute an RNase H type-2 domain. Asp14, Glu15, and Asp106 together coordinate a divalent metal cation.

The protein belongs to the RNase HII family. Requires Mn(2+) as cofactor. It depends on Mg(2+) as a cofactor.

It is found in the cytoplasm. It carries out the reaction Endonucleolytic cleavage to 5'-phosphomonoester.. Endonuclease that specifically degrades the RNA of RNA-DNA hybrids. The sequence is that of Ribonuclease HII from Halorhodospira halophila (strain DSM 244 / SL1) (Ectothiorhodospira halophila (strain DSM 244 / SL1)).